The following is a 441-amino-acid chain: Alpha-methylserine aldolase (441 aa).

An N6-(pyridoxal phosphate)lysine modification is found at K256.

Belongs to the SHMT family. Alpha-methylserine aldolase subfamily. As to quaternary structure, homodimer. Pyridoxal 5'-phosphate is required as a cofactor.

The enzyme catalyses 2-methyl-L-serine = formaldehyde + L-alanine. In terms of biological role, catalyzes the reversible interconversion of alpha-methyl-L-serine to L-alanine and formaldehyde. The protein is Alpha-methylserine aldolase of Variovorax paradoxus.